Consider the following 935-residue polypeptide: Bifunctional alpha-galactosidase/sucrose kinase AgaSK (935 aa).

Residues 1 to 720 (MAIIYNPNKK…EAYQFAFTEL (720 aa)) are alpha-galactosidase. Residues E176, E277, and F280 each coordinate Mg(2+). Substrate contacts are provided by residues 366 to 367 (DD), R443, 476 to 480 (KWDMN), and 518 to 521 (CSGG). D526 serves as the catalytic Nucleophile. D540 contacts substrate. The active-site Proton donor/acceptor is E606. A sucrose kinase region spans residues 721–935 (KEAGRLYEKV…VGKDGSVYEQ (215 aa)). Residues 748-752 (GGSGS) and A824 contribute to the ATP site.

In the N-terminal section; belongs to the glycosyl hydrolase 36 family. It in the C-terminal section; belongs to the uridine kinase family. Homotetramer. It depends on Mg(2+) as a cofactor.

The catalysed reaction is Hydrolysis of terminal, non-reducing alpha-D-galactose residues in alpha-D-galactosides, including galactose oligosaccharides, galactomannans and galactolipids.. Its function is as follows. Bifunctional enzyme with alpha-galactosidase and sucrose kinase activities. Produces sucrose-6-phosphate directly from raffinose. Binds ATP. Phosphorylates sucrose specifically on the C6 position of glucose in the presence of ATP. Hydrolyzes melibiose, raffinose, stachyose and synthetic substrate p-nitrophenyl-alpha-D-galactopyranoside with high activity. Low activity against locust bean gum, guar gum and synthetic substrates xylose alpha-D-4-nitrophenol, glucose alpha-D-4-nitrophenol and o-nitrophenyl-alpha-D-galactopyranoside. This is Bifunctional alpha-galactosidase/sucrose kinase AgaSK from Mediterraneibacter gnavus (Ruminococcus gnavus).